We begin with the raw amino-acid sequence, 159 residues long: Transcription elongation factor GreA (159 aa).

The stretch at 44–75 forms a coiled coil; it reads SENAEYDAAREQQSQTEARIADLESKLSSATI.

It belongs to the GreA/GreB family.

In terms of biological role, necessary for efficient RNA polymerase transcription elongation past template-encoded arresting sites. The arresting sites in DNA have the property of trapping a certain fraction of elongating RNA polymerases that pass through, resulting in locked ternary complexes. Cleavage of the nascent transcript by cleavage factors such as GreA or GreB allows the resumption of elongation from the new 3'terminus. GreA releases sequences of 2 to 3 nucleotides. This is Transcription elongation factor GreA from Chlorobium phaeovibrioides (strain DSM 265 / 1930) (Prosthecochloris vibrioformis (strain DSM 265)).